The following is a 264-amino-acid chain: Thymidylate synthase (264 aa).

Position 21 (arginine 21) interacts with dUMP. Residue histidine 51 participates in (6R)-5,10-methylene-5,6,7,8-tetrahydrofolate binding. 126 to 127 is a binding site for dUMP; sequence RR. The Nucleophile role is filled by cysteine 146. DUMP contacts are provided by residues 166–169, asparagine 177, and 207–209; these read RSCD and HLY. Aspartate 169 serves as a coordination point for (6R)-5,10-methylene-5,6,7,8-tetrahydrofolate. (6R)-5,10-methylene-5,6,7,8-tetrahydrofolate is bound at residue alanine 263.

Belongs to the thymidylate synthase family. Bacterial-type ThyA subfamily. In terms of assembly, homodimer.

It localises to the cytoplasm. It catalyses the reaction dUMP + (6R)-5,10-methylene-5,6,7,8-tetrahydrofolate = 7,8-dihydrofolate + dTMP. The protein operates within pyrimidine metabolism; dTTP biosynthesis. Catalyzes the reductive methylation of 2'-deoxyuridine-5'-monophosphate (dUMP) to 2'-deoxythymidine-5'-monophosphate (dTMP) while utilizing 5,10-methylenetetrahydrofolate (mTHF) as the methyl donor and reductant in the reaction, yielding dihydrofolate (DHF) as a by-product. This enzymatic reaction provides an intracellular de novo source of dTMP, an essential precursor for DNA biosynthesis. The protein is Thymidylate synthase of Edwardsiella ictaluri (strain 93-146).